The following is a 168-amino-acid chain: ATP synthase F(1) complex subunit delta, mitochondrial (168 aa).

Residues 1-22 constitute a mitochondrion transit peptide; sequence MLPAALLRRPGLGRLVRHARAY. Lysine 136 and lysine 165 each carry N6-acetyllysine; alternate. An N6-succinyllysine; alternate mark is found at lysine 136 and lysine 165.

The protein belongs to the ATPase epsilon chain family. Component of the ATP synthase complex composed at least of ATP5F1A/subunit alpha, ATP5F1B/subunit beta, ATP5MC1/subunit c (homooctomer), MT-ATP6/subunit a, MT-ATP8/subunit 8, ATP5ME/subunit e, ATP5MF/subunit f, ATP5MG/subunit g, ATP5MK/subunit k, ATP5MJ/subunit j, ATP5F1C/subunit gamma, ATP5F1D/subunit delta, ATP5F1E/subunit epsilon, ATP5PF/subunit F6, ATP5PB/subunit b, ATP5PD/subunit d, ATP5PO/subunit OSCP. ATP synthase complex consists of a soluble F(1) head domain (subunits alpha(3) and beta(3)) - the catalytic core - and a membrane F(0) domain - the membrane proton channel (subunits c, a, 8, e, f, g, k and j). These two domains are linked by a central stalk (subunits gamma, delta, and epsilon) rotating inside the F1 region and a stationary peripheral stalk (subunits F6, b, d, and OSCP). Component of a complex composed at least by ATPIF1, ATP5F1A, ATP5F1B, ATP5F1C AND ATP5F1E.

It localises to the mitochondrion. Its subcellular location is the mitochondrion inner membrane. Its function is as follows. Subunit delta, of the mitochondrial membrane ATP synthase complex (F(1)F(0) ATP synthase or Complex V) that produces ATP from ADP in the presence of a proton gradient across the membrane which is generated by electron transport complexes of the respiratory chain. ATP synthase complex consist of a soluble F(1) head domain - the catalytic core - and a membrane F(1) domain - the membrane proton channel. These two domains are linked by a central stalk rotating inside the F(1) region and a stationary peripheral stalk. During catalysis, ATP synthesis in the catalytic domain of F(1) is coupled via a rotary mechanism of the central stalk subunits to proton translocation. In vivo, can only synthesize ATP although its ATP hydrolase activity can be activated artificially in vitro. With the central stalk subunit gamma, is essential for the biogenesis of F(1) catalytic part of the ATP synthase complex namely in the formation of F1 assembly intermediate. The sequence is that of ATP synthase F(1) complex subunit delta, mitochondrial from Homo sapiens (Human).